Reading from the N-terminus, the 270-residue chain is Thymidine kinase 2, mitochondrial (270 aa).

Residues 1-38 (MLLRSLRSWAARSPRSVGPGSSGSPGSLDSGAGPLWAP) constitute a mitochondrion transit peptide. Residues 1-54 (MLLRSLRSWAARSPRSVGPGSSGSPGSLDSGAGPLWAPRRAWPPDKDRENDKEK) form a disordered region. The span at 13 to 34 (SPRSVGPGSSGSPGSLDSGAGP) shows a compositional bias: low complexity. Residues 42 to 54 (WPPDKDRENDKEK) are compositionally biased toward basic and acidic residues. ATP is bound at residue 62–70 (GNIASGKTT). Glu-138 acts as the Proton acceptor in catalysis.

Belongs to the DCK/DGK family. Homodimer. As to expression, found in most tissues; highly expressed in liver.

Its subcellular location is the mitochondrion. It catalyses the reaction thymidine + ATP = dTMP + ADP + H(+). The enzyme catalyses 2'-deoxycytidine + ATP = dCMP + ADP + H(+). It carries out the reaction 2'-deoxyuridine + ATP = dUMP + ADP + H(+). Functionally, phosphorylates thymidine, deoxycytidine, and deoxyuridine in the mitochondrial matrix. In non-replicating cells, where cytosolic dNTP synthesis is down-regulated, mtDNA synthesis depends solely on TK2 and DGUOK. This Mus musculus (Mouse) protein is Thymidine kinase 2, mitochondrial (Tk2).